A 495-amino-acid chain; its full sequence is B3 domain-containing protein Os01g0234100 (495 aa).

Disordered regions lie at residues 1-25 (MAID…KMEQ) and 88-108 (PGIP…NTTE). Positions 92–108 (QTCNTQNTSNGRTNTTE) are enriched in polar residues. Positions 152 to 243 (FVKHMLHSHV…KFKVHIIRDK (92 aa)) form a DNA-binding region, TF-B3. Residues 268-282 (EATDNATKPKEDPET) show a composition bias toward basic and acidic residues. The tract at residues 268–289 (EATDNATKPKEDPETTRVSSKV) is disordered.

It localises to the nucleus. The polypeptide is B3 domain-containing protein Os01g0234100 (Oryza sativa subsp. japonica (Rice)).